Reading from the N-terminus, the 187-residue chain is UPF0340 protein SPN23F05980 (187 aa).

It belongs to the UPF0340 family.

This chain is UPF0340 protein SPN23F05980, found in Streptococcus pneumoniae (strain ATCC 700669 / Spain 23F-1).